Here is a 329-residue protein sequence, read N- to C-terminus: Malate dehydrogenase (329 aa).

12–18 is an NAD(+) binding site; that stretch reads GAAGQIG. Residues Arg93 and Arg99 each contribute to the substrate site. Residues Asn106, Gln113, and 130–132 contribute to the NAD(+) site; that span reads TGN. Residues Asn132 and Arg163 each coordinate substrate. The active-site Proton acceptor is His188.

It belongs to the LDH/MDH superfamily. MDH type 2 family.

It carries out the reaction (S)-malate + NAD(+) = oxaloacetate + NADH + H(+). In terms of biological role, catalyzes the reversible oxidation of malate to oxaloacetate. The chain is Malate dehydrogenase from Mycobacterium bovis (strain ATCC BAA-935 / AF2122/97).